A 114-amino-acid polypeptide reads, in one-letter code: Cytochrome c2 (114 aa).

Position 1 is a pyrrolidone carboxylic acid (Gln1). Heme c is bound by residues Cys13, Cys16, His17, and Met93.

It belongs to the cytochrome c family. In terms of processing, binds 1 heme c group covalently per subunit.

It is found in the periplasm. Functionally, cytochrome c2 is found mainly in purple, non-sulfur, photosynthetic bacteria where it functions as the electron donor to the oxidized bacteriochlorophyll in the photophosphorylation pathway. However, it may also have a role in the respiratory chain and is found in some non-photosynthetic bacteria. The protein is Cytochrome c2 of Rhodopseudomonas palustris.